A 382-amino-acid chain; its full sequence is Elloramycin glycosyltransferase ElmGT (382 aa).

This sequence belongs to the glycosyltransferase 28 family.

It catalyses the reaction 8-demethyltetracenomycin C + dTDP-beta-L-rhamnose = 8-demethyl-8-alpha-L-rhamnosyl-tetracenomycin C + dTDP + H(+). Its pathway is antibiotic biosynthesis. Functionally, glycosyltransferase that transfers an L-rhamnose moiety from dTDP-L-rhamnose to the elloramycin aglycone 8-demethyl-tetracenomycin C (8DMTC) in elloramycin biosynthesis, an antitumor polyketide. Possesses donor substrate flexibility: able to transfer at least 11 different sugars to 8DMTC, such as NDP-D-glucose, as well as NDP-L-digitoxose, including both L- and D-isomeric forms of some sugars. The sequence is that of Elloramycin glycosyltransferase ElmGT from Streptomyces olivaceus.